The chain runs to 392 residues: Heat-inducible transcription repressor HrcA (392 aa).

The protein belongs to the HrcA family.

Negative regulator of class I heat shock genes (grpE-dnaK-dnaJ and groELS operons). Prevents heat-shock induction of these operons. This Chlamydia trachomatis serovar D (strain ATCC VR-885 / DSM 19411 / UW-3/Cx) protein is Heat-inducible transcription repressor HrcA.